The chain runs to 297 residues: MRVFSSIDELRHTLDALKRQGRNVGLVPTMGYLHAGHMELVARARAENDIVVVSIFVNPLQFGPAEDLSKYPRDLERDAAMLKQAGVNFLFAPGVGDMYPRPMKTVVDIPDLGRELEGAVRPGHFAGVATVVSKLFNIVQPQTAYFGEKDYQQVVIIKRMVEDLAVPVRVISVPTVRDADGLALSSRNVYLSLEERRAAVIVPQTLDEAERLIGDGLTDAKTLEAKLTEFLGREPLARPEVVAVRDATTLEPVTSIGGSVVVALFVRVGSTRLLDNRVIGDNRTIGGRNQPGKGVTK.

30–37 lines the ATP pocket; the sequence is MGYLHAGH. Catalysis depends on His-37, which acts as the Proton donor. (R)-pantoate is bound at residue Gln-61. Gln-61 contributes to the beta-alanine binding site. 147-150 is a binding site for ATP; it reads GEKD. Gln-153 is a (R)-pantoate binding site. Residues Val-176 and 184-187 each bind ATP; that span reads LSSR.

This sequence belongs to the pantothenate synthetase family. Homodimer.

Its subcellular location is the cytoplasm. It carries out the reaction (R)-pantoate + beta-alanine + ATP = (R)-pantothenate + AMP + diphosphate + H(+). Its pathway is cofactor biosynthesis; (R)-pantothenate biosynthesis; (R)-pantothenate from (R)-pantoate and beta-alanine: step 1/1. Its function is as follows. Catalyzes the condensation of pantoate with beta-alanine in an ATP-dependent reaction via a pantoyl-adenylate intermediate. The polypeptide is Pantothenate synthetase (Rhizobium etli (strain ATCC 51251 / DSM 11541 / JCM 21823 / NBRC 15573 / CFN 42)).